We begin with the raw amino-acid sequence, 445 residues long: Methionine aminopeptidase 2-3 (445 aa).

A disordered region spans residues 14–115 (ISDADANGAD…ENRYRTTSEE (102 aa)). Residues 38–47 (EDDDSDDDVA) are compositionally biased toward acidic residues. The segment covering 60–75 (AKKKKNKKRKPKKKQP) has biased composition (basic residues). Polar residues predominate over residues 85–95 (PLSQLFPNNTY). A compositionally biased stretch (basic and acidic residues) spans 97–115 (KGEEVEYKDENRYRTTSEE). Histidine 198 contacts substrate. Residues aspartate 218, aspartate 229, and histidine 298 each coordinate a divalent metal cation. Histidine 306 lines the substrate pocket. A divalent metal cation contacts are provided by glutamate 331 and glutamate 426.

Belongs to the peptidase M24A family. Methionine aminopeptidase eukaryotic type 2 subfamily. The cofactor is Co(2+). Zn(2+) is required as a cofactor. It depends on Mn(2+) as a cofactor. Fe(2+) serves as cofactor.

It localises to the cytoplasm. It catalyses the reaction Release of N-terminal amino acids, preferentially methionine, from peptides and arylamides.. In terms of biological role, cotranslationally removes the N-terminal methionine from nascent proteins. The N-terminal methionine is often cleaved when the second residue in the primary sequence is small and uncharged (Met-Ala-, Cys, Gly, Pro, Ser, Thr, or Val). This Neosartorya fischeri (strain ATCC 1020 / DSM 3700 / CBS 544.65 / FGSC A1164 / JCM 1740 / NRRL 181 / WB 181) (Aspergillus fischerianus) protein is Methionine aminopeptidase 2-3.